The following is a 382-amino-acid chain: Succinyl-diaminopimelate desuccinylase (382 aa).

Zn(2+) is bound at residue H72. Residue D74 is part of the active site. Residue D105 participates in Zn(2+) binding. The active-site Proton acceptor is E139. 3 residues coordinate Zn(2+): E140, E168, and H354.

It belongs to the peptidase M20A family. DapE subfamily. As to quaternary structure, homodimer. Requires Zn(2+) as cofactor. Co(2+) is required as a cofactor.

It carries out the reaction N-succinyl-(2S,6S)-2,6-diaminopimelate + H2O = (2S,6S)-2,6-diaminopimelate + succinate. It functions in the pathway amino-acid biosynthesis; L-lysine biosynthesis via DAP pathway; LL-2,6-diaminopimelate from (S)-tetrahydrodipicolinate (succinylase route): step 3/3. Its function is as follows. Catalyzes the hydrolysis of N-succinyl-L,L-diaminopimelic acid (SDAP), forming succinate and LL-2,6-diaminopimelate (DAP), an intermediate involved in the bacterial biosynthesis of lysine and meso-diaminopimelic acid, an essential component of bacterial cell walls. The protein is Succinyl-diaminopimelate desuccinylase of Shewanella amazonensis (strain ATCC BAA-1098 / SB2B).